Reading from the N-terminus, the 82-residue chain is ATP synthase subunit c (82 aa).

2 consecutive transmembrane segments (helical) span residues A6–I26 and L57–A77.

The protein belongs to the ATPase C chain family. In terms of assembly, F-type ATPases have 2 components, F(1) - the catalytic core - and F(0) - the membrane proton channel. F(1) has five subunits: alpha(3), beta(3), gamma(1), delta(1), epsilon(1). F(0) has four main subunits: a(1), b(1), b'(1) and c(10-14). The alpha and beta chains form an alternating ring which encloses part of the gamma chain. F(1) is attached to F(0) by a central stalk formed by the gamma and epsilon chains, while a peripheral stalk is formed by the delta, b and b' chains.

It localises to the cell inner membrane. In terms of biological role, f(1)F(0) ATP synthase produces ATP from ADP in the presence of a proton or sodium gradient. F-type ATPases consist of two structural domains, F(1) containing the extramembraneous catalytic core and F(0) containing the membrane proton channel, linked together by a central stalk and a peripheral stalk. During catalysis, ATP synthesis in the catalytic domain of F(1) is coupled via a rotary mechanism of the central stalk subunits to proton translocation. Functionally, key component of the F(0) channel; it plays a direct role in translocation across the membrane. A homomeric c-ring of between 10-14 subunits forms the central stalk rotor element with the F(1) delta and epsilon subunits. The chain is ATP synthase subunit c from Gloeobacter violaceus (strain ATCC 29082 / PCC 7421).